A 261-amino-acid polypeptide reads, in one-letter code: Cytochrome c oxidase subunit 3 (261 aa).

Topologically, residues 1–15 (MTHQTHAYHMVNPSP) are mitochondrial matrix. A helical transmembrane segment spans residues 16 to 34 (WPLTGALSALLMTSGLTMW). Over 35-40 (FHFNSM) the chain is Mitochondrial intermembrane. Residues 41-66 (TLLTLGLTTNMLTMYQWWRDIIREST) form a helical membrane-spanning segment. Topologically, residues 67–72 (FQGHHT) are mitochondrial matrix. The chain crosses the membrane as a helical span at residues 73-105 (PNVQKGLRYGMILFIISEVLFFTGFFWAFYHSS). The Mitochondrial intermembrane portion of the chain corresponds to 106–128 (LAPTPELGGCWPPTGIHPLNPLE). A helical transmembrane segment spans residues 129 to 152 (VPLLNTSVLLASGVSITWAHHSLM). At 153–155 (EGN) the chain is on the mitochondrial matrix side. A helical membrane pass occupies residues 156–183 (RNHMLQALFITISLGVYFTLLQASEYYE). At 184–190 (APFTISD) the chain is on the mitochondrial intermembrane side. The chain crosses the membrane as a helical span at residues 191-223 (GVYGSTFFVATGFHGLHVIIGSTFLIVCFFRQL). Residues 224–232 (KFHFTSNHH) are Mitochondrial matrix-facing. A helical transmembrane segment spans residues 233-256 (FGFEAAAWYWHFVDVVWLFLYVSI). Over 257 to 261 (YWWGS) the chain is Mitochondrial intermembrane.

The protein belongs to the cytochrome c oxidase subunit 3 family. As to quaternary structure, component of the cytochrome c oxidase (complex IV, CIV), a multisubunit enzyme composed of 14 subunits. The complex is composed of a catalytic core of 3 subunits MT-CO1, MT-CO2 and MT-CO3, encoded in the mitochondrial DNA, and 11 supernumerary subunits COX4I, COX5A, COX5B, COX6A, COX6B, COX6C, COX7A, COX7B, COX7C, COX8 and NDUFA4, which are encoded in the nuclear genome. The complex exists as a monomer or a dimer and forms supercomplexes (SCs) in the inner mitochondrial membrane with NADH-ubiquinone oxidoreductase (complex I, CI) and ubiquinol-cytochrome c oxidoreductase (cytochrome b-c1 complex, complex III, CIII), resulting in different assemblies (supercomplex SCI(1)III(2)IV(1) and megacomplex MCI(2)III(2)IV(2)).

Its subcellular location is the mitochondrion inner membrane. It catalyses the reaction 4 Fe(II)-[cytochrome c] + O2 + 8 H(+)(in) = 4 Fe(III)-[cytochrome c] + 2 H2O + 4 H(+)(out). Functionally, component of the cytochrome c oxidase, the last enzyme in the mitochondrial electron transport chain which drives oxidative phosphorylation. The respiratory chain contains 3 multisubunit complexes succinate dehydrogenase (complex II, CII), ubiquinol-cytochrome c oxidoreductase (cytochrome b-c1 complex, complex III, CIII) and cytochrome c oxidase (complex IV, CIV), that cooperate to transfer electrons derived from NADH and succinate to molecular oxygen, creating an electrochemical gradient over the inner membrane that drives transmembrane transport and the ATP synthase. Cytochrome c oxidase is the component of the respiratory chain that catalyzes the reduction of oxygen to water. Electrons originating from reduced cytochrome c in the intermembrane space (IMS) are transferred via the dinuclear copper A center (CU(A)) of subunit 2 and heme A of subunit 1 to the active site in subunit 1, a binuclear center (BNC) formed by heme A3 and copper B (CU(B)). The BNC reduces molecular oxygen to 2 water molecules using 4 electrons from cytochrome c in the IMS and 4 protons from the mitochondrial matrix. This is Cytochrome c oxidase subunit 3 (MT-CO3) from Antidorcas marsupialis (Springbok).